Consider the following 155-residue polypeptide: Small ribosomal subunit protein uS7 (155 aa).

The protein belongs to the universal ribosomal protein uS7 family. Part of the 30S ribosomal subunit. Contacts proteins S9 and S11.

Functionally, one of the primary rRNA binding proteins, it binds directly to 16S rRNA where it nucleates assembly of the head domain of the 30S subunit. Is located at the subunit interface close to the decoding center, probably blocks exit of the E-site tRNA. This chain is Small ribosomal subunit protein uS7, found in Chlorobium luteolum (strain DSM 273 / BCRC 81028 / 2530) (Pelodictyon luteolum).